A 25-amino-acid polypeptide reads, in one-letter code: Dermaseptin-5.1TR (25 aa).

At Val25 the chain carries Valine amide.

Expressed by the skin glands.

The protein localises to the secreted. Has antimicrobial activity. In Phyllomedusa trinitatis (Trinidad leaf frog), this protein is Dermaseptin-5.1TR.